The primary structure comprises 516 residues: Lysine--tRNA ligase (516 aa).

The segment at 1-23 is disordered; sequence MTEPNRAQAAPASPTAELPAADE. Glu-426 and Glu-433 together coordinate Mg(2+).

Belongs to the class-II aminoacyl-tRNA synthetase family. In terms of assembly, homodimer. Mg(2+) serves as cofactor.

It localises to the cytoplasm. It carries out the reaction tRNA(Lys) + L-lysine + ATP = L-lysyl-tRNA(Lys) + AMP + diphosphate. The chain is Lysine--tRNA ligase from Cupriavidus pinatubonensis (strain JMP 134 / LMG 1197) (Cupriavidus necator (strain JMP 134)).